The primary structure comprises 160 residues: Phosphopantetheine adenylyltransferase (160 aa).

Ser9 provides a ligand contact to substrate. ATP-binding positions include 9–10 and His17; that span reads SF. Positions 41, 73, and 87 each coordinate substrate. ATP-binding positions include 88 to 90, Glu98, and 123 to 129; these read GLR and YSYLSSS.

Belongs to the bacterial CoaD family. In terms of assembly, homohexamer. Mg(2+) is required as a cofactor.

The protein resides in the cytoplasm. It carries out the reaction (R)-4'-phosphopantetheine + ATP + H(+) = 3'-dephospho-CoA + diphosphate. The protein operates within cofactor biosynthesis; coenzyme A biosynthesis; CoA from (R)-pantothenate: step 4/5. Its function is as follows. Reversibly transfers an adenylyl group from ATP to 4'-phosphopantetheine, yielding dephospho-CoA (dPCoA) and pyrophosphate. This is Phosphopantetheine adenylyltransferase from Clostridium tetani (strain Massachusetts / E88).